Here is a 171-residue protein sequence, read N- to C-terminus: 3-hydroxydecanoyl-[acyl-carrier-protein] dehydratase (171 aa).

His-70 is a catalytic residue.

It belongs to the thioester dehydratase family. FabA subfamily. As to quaternary structure, homodimer.

It localises to the cytoplasm. The catalysed reaction is a (3R)-hydroxyacyl-[ACP] = a (2E)-enoyl-[ACP] + H2O. It carries out the reaction (3R)-hydroxydecanoyl-[ACP] = (2E)-decenoyl-[ACP] + H2O. It catalyses the reaction (2E)-decenoyl-[ACP] = (3Z)-decenoyl-[ACP]. It functions in the pathway lipid metabolism; fatty acid biosynthesis. Necessary for the introduction of cis unsaturation into fatty acids. Catalyzes the dehydration of (3R)-3-hydroxydecanoyl-ACP to E-(2)-decenoyl-ACP and then its isomerization to Z-(3)-decenoyl-ACP. Can catalyze the dehydratase reaction for beta-hydroxyacyl-ACPs with saturated chain lengths up to 16:0, being most active on intermediate chain length. This chain is 3-hydroxydecanoyl-[acyl-carrier-protein] dehydratase, found in Shewanella frigidimarina (strain NCIMB 400).